We begin with the raw amino-acid sequence, 391 residues long: Phosphoglycerate kinase (391 aa).

Substrate-binding positions include 21-23 (DLN), Arg36, 59-62 (HLGR), Arg113, and Arg146. Residues Lys197, Glu319, and 345 to 348 (GGDT) contribute to the ATP site.

The protein belongs to the phosphoglycerate kinase family. In terms of assembly, monomer.

It is found in the cytoplasm. It carries out the reaction (2R)-3-phosphoglycerate + ATP = (2R)-3-phospho-glyceroyl phosphate + ADP. It participates in carbohydrate degradation; glycolysis; pyruvate from D-glyceraldehyde 3-phosphate: step 2/5. This is Phosphoglycerate kinase from Shewanella baltica (strain OS155 / ATCC BAA-1091).